The following is a 485-amino-acid chain: MAKLLQRVEITLRSFYIFNSTFGQVEGEEHKKVLFYHPNDIELNTKIKDVGLSEAIIRFTGTFTSEDDCQALHTQKTTQLFYQPEPGYWLVLVLNVPKEVRLKEGVEVADYRGAEISDRIYRAILRQCYQMFRFQNGCFSSCGSEEPNPDKRRELLCQKLLQFYDQHLTNLRDPAQCDIIDMLHSIQYLPLDKTLFLRAQNFGTLCETFPDIKESIMLYQEQVLCGGKLSPEDLHCVHSYVVQHVLKVEASSSTIAVSPSLKRSISECQVGGFVRSRQKVAGDEHDAVNEEDHPMKVYVTLDKEAKPYYLLIYRALHITLCLFLNADQVAPKQDLYDDLHAYMAPQLTSLARDISSELTKEAVGAAGQDNSSGNSETAPKYLFINEQSLQHHTNFQRHLPQGLPRNVLSIIADLANGSGKAEMESAPAEEVQVKTTNDYWIVKRRCNYRQYYVILCNSKATLLDVTQEARRIFEQELTDDVFFDK.

It belongs to the CCZ1 family. In terms of assembly, component of the Mon1-Ccz1 guanyl-nucleotide exchange factor complex made up of Mon1, Ccz1 and Bulli; the interaction of Bulli with the Mon1-Ccz1 heterodimer is mediated via the C-terminal Mic1 domain of Bulli. Mon1 and Ccz1 form a stable complex which displays Rab7 GEF activity with or without Bulli; GEF activity is enhanced by Bulli possibly by improving membrane association of the complex. Interacts with Rab5 and Rab7; preferentially binds GTP-bound Rab5 and GDP-bound Rab7.

It localises to the cytoplasm. The protein resides in the cytosol. With respect to regulation, the Rab7 guanyl-nucleotide exchange factor (GEF) activity of the Mon1-Ccz1 complex is autoinhibited by the N-terminal disordered region of Mon1. GEF activity is stimulated by Rab5-mediated recruitment to membranes. Functionally, part of the Mon1-Ccz1 guanyl-nucleotide exchange factor complex specific for Rab7 that promotes the exchange of GDP to GTP, converting Rab7 from an inactive GDP-bound form into an active GTP-bound form. Required for recruitment of Rab7 to endosomal and autophagosomal membranes to mediate endolysosomal and autolysosomal vesicle maturation. Required for fusion of multivesicular bodies and lysosomes but not their formation or trafficking. Involved in the replacement of Rab5 (and possibly Rab4) with Rab7, also known as Rab conversion or the Rab cascade, during endosomal maturation. The Mon1-Ccz1 complex is recruited to phosphatidylinositol 3-phosphate (PtdIns[3]P) enriched membranes by Rab5, which stimulates recruitment and guanyl-nucleotide exchange of Rab7. Together with Rab7 required for autolysosome formation in fat cells and autophagic degradation during starvation-induced basal and developmental autophagy. The protein is Vacuolar fusion protein CCZ1 homolog of Drosophila melanogaster (Fruit fly).